Here is a 118-residue protein sequence, read N- to C-terminus: V-type proton ATPase subunit G 3 (118 aa).

The disordered stretch occupies residues 1–34; it reads MTSQSQGIHQLLQAEKRAKDKLEEAKKRKGKRLK. Residues 5-54 are a coiled coil; that stretch reads SQGIHQLLQAEKRAKDKLEEAKKRKGKRLKQAKEEAMVEIDQYRMQRDKE. The span at 14 to 26 shows a compositional bias: basic and acidic residues; the sequence is AEKRAKDKLEEAK.

The protein belongs to the V-ATPase G subunit family. In terms of assembly, V-ATPase is a heteromultimeric enzyme made up of two complexes: the ATP-hydrolytic V1 complex and the proton translocation V0 complex. The V1 complex consists of three catalytic AB heterodimers that form a heterohexamer, three peripheral stalks each consisting of EG heterodimers, one central rotor including subunits D and F, and the regulatory subunits C and H. The proton translocation complex V0 consists of the proton transport subunit a, a ring of proteolipid subunits c9c'', rotary subunit d, subunits e and f, and the accessory subunits ATP6AP1/Ac45 and ATP6AP2/PRR. Kidney.

In terms of biological role, subunit of the V1 complex of vacuolar(H+)-ATPase (V-ATPase), a multisubunit enzyme composed of a peripheral complex (V1) that hydrolyzes ATP and a membrane integral complex (V0) that translocates protons. V-ATPase is responsible for acidifying and maintaining the pH of intracellular compartments and in some cell types, is targeted to the plasma membrane, where it is responsible for acidifying the extracellular environment. This chain is V-type proton ATPase subunit G 3 (ATP6V1G3), found in Homo sapiens (Human).